The primary structure comprises 307 residues: ADP,ATP carrier protein 3 (307 aa).

Solcar repeat units lie at residues 10 to 103 (TNFA…IKLM), 114 to 206 (KWFA…LKPL), and 214 to 300 (GSFL…LQMI). The next 5 membrane-spanning stretches (helical) occupy residues 12–39 (FAIN…VKIL), 80–104 (TANV…KLMF), 112–132 (YGKW…LSLL), 182–203 (FMPS…FDSL), and 217–237 (LASF…SYPL). Residues Arg85 and Lys97 each contribute to the ADP site. Residue Arg241 participates in ADP binding. An important for transport activity region spans residues 241–246 (RRRMMM). The Nucleotide carrier signature motif motif lies at 241–246 (RRRMMM). A helical transmembrane segment spans residues 277–297 (CGANILRSVAGAGVISMYDQL).

This sequence belongs to the mitochondrial carrier (TC 2.A.29) family. As to quaternary structure, monomer.

Its subcellular location is the mitochondrion inner membrane. The enzyme catalyses ADP(in) + ATP(out) = ADP(out) + ATP(in). Its activity is regulated as follows. The matrix-open state (m-state) is inhibited by the membrane-permeable bongkrekic acid (BKA). The cytoplasmic-open state (c-state) is inhibited by the membrane-impermeable toxic inhibitor carboxyatractyloside (CATR). ADP:ATP antiporter that mediates import of ADP into the mitochondrial matrix for ATP synthesis, and export of ATP out to fuel the cell. Cycles between the cytoplasmic-open state (c-state) and the matrix-open state (m-state): operates by the alternating access mechanism with a single substrate-binding site intermittently exposed to either the cytosolic (c-state) or matrix (m-state) side of the inner mitochondrial membrane. The chain is ADP,ATP carrier protein 3 (AAC3) from Saccharomyces cerevisiae (strain ATCC 204508 / S288c) (Baker's yeast).